The following is a 1530-amino-acid chain: B-cell CLL/lymphoma 9-like protein (1530 aa).

Disordered stretches follow at residues 1–101, 155–187, 246–353, 398–439, 473–503, 821–1076, 1250–1279, and 1310–1331; these read MHSE…VLEP, QGHS…TDLH, HISS…PSVL, SGTG…IGGG, QTQN…LSSP, QNGR…QNPL, KGMS…SEVI, and SETM…QVSS. Polar residues predominate over residues 8–18; that stretch reads SNHGKQVTSGA. Low complexity predominate over residues 19-34; it reads QSQLPNVNQAQQQAPA. Over residues 81–93 the composition is skewed to basic and acidic residues; the sequence is ERSVSIDTGDQRE. Positions 156–165 are enriched in low complexity; that stretch reads GHSGSSTTGH. A compositionally biased stretch (gly residues) spans 170–180; sequence GGPGLGSGHGP. Composition is skewed to polar residues over residues 247–264 and 278–287; these read ISSS…QSGT and GTSTPSSTGH. Low complexity-rich tracts occupy residues 409-426 and 485-503; these read GPNG…NSND and SLMG…LSSP. 3 stretches are compositionally biased toward polar residues: residues 875-891, 920-930, and 944-953; these read LSST…TGSR, QLKSPSLSQEP, and SPSQLPQSGP. Low complexity-rich tracts occupy residues 960–971, 979–994, and 1031–1060; these read AASGAGTPSSTS, GPSL…PGHL, and SSST…INPS. Over residues 1258–1268 the composition is skewed to pro residues; it reads PHQPDSFPPMP.

It belongs to the BCL9 family.

It localises to the nucleus. Its function is as follows. Transcriptional regulator that may act as an activator. Plays a role for mesoderm patterning in early embryogenesis. The protein is B-cell CLL/lymphoma 9-like protein (bcl9l) of Danio rerio (Zebrafish).